The sequence spans 154 residues: Bacterial ferritin (154 aa).

The 145-residue stretch at 1–145 (MQGNQAVVDY…QQLRLIELIG (145 aa)) folds into the Ferritin-like diiron domain. 6 residues coordinate Fe cation: Glu18, Glu51, His54, Glu93, Glu127, and His130.

It belongs to the bacterioferritin family. Forms a bacterioferritin (BFR) complex with BfrB. Heterooligomer of 24 subunits, arranged as 12 dimers, that are packed together to form an approximately spherical molecule with a central cavity, in which large amounts of iron can be deposited.

The protein resides in the cytoplasm. It catalyses the reaction 4 Fe(2+) + O2 + 4 H(+) = 4 Fe(3+) + 2 H2O. It carries out the reaction Fe(2+)(in) = Fe(2+)(out). Functionally, iron-storage protein. Its ferroxidase center binds Fe(2+), oxidizes it using dioxygen to Fe(3+), and participates in the subsequent Fe(3+) oxide mineral core formation within the central cavity of the BFR protein shell. Plays a role in protection against iron-mediated oxidative stress. This is Bacterial ferritin from Neisseria gonorrhoeae.